A 258-amino-acid chain; its full sequence is UPF0246 protein CGSHiGG_08495 (258 aa).

It belongs to the UPF0246 family.

In Haemophilus influenzae (strain PittGG), this protein is UPF0246 protein CGSHiGG_08495.